The following is a 176-amino-acid chain: Cytochrome b (176 aa).

Helical transmembrane passes span 33 to 53, 77 to 98, and 113 to 133; these read FGSL…FLAM, WLLR…YLHV, and WNMG…GYVL. Heme b is bound by residues histidine 83 and histidine 97.

Belongs to the cytochrome b family. In terms of assembly, the cytochrome bc1 complex contains 11 subunits: 3 respiratory subunits (MT-CYB, CYC1 and UQCRFS1), 2 core proteins (UQCRC1 and UQCRC2) and 6 low-molecular weight proteins (UQCRH/QCR6, UQCRB/QCR7, UQCRQ/QCR8, UQCR10/QCR9, UQCR11/QCR10 and a cleavage product of UQCRFS1). This cytochrome bc1 complex then forms a dimer. Heme b is required as a cofactor.

The protein resides in the mitochondrion inner membrane. Its function is as follows. Component of the ubiquinol-cytochrome c reductase complex (complex III or cytochrome b-c1 complex) that is part of the mitochondrial respiratory chain. The b-c1 complex mediates electron transfer from ubiquinol to cytochrome c. Contributes to the generation of a proton gradient across the mitochondrial membrane that is then used for ATP synthesis. This chain is Cytochrome b (MT-CYB), found in Tomopeas ravum (Blunt-eared bat).